A 627-amino-acid polypeptide reads, in one-letter code: Mitochondrial Rho GTPase 1 (627 aa).

The Miro 1 domain maps to M1–H169. Residues M1 to R599 lie on the Cytoplasmic side of the membrane. GTP-binding positions include G10–S17, D58–R62, and N114–D117. EF-hand domains lie at L185–K220 and A305–L340. Ca(2+) is bound by residues D198, D200, D202, Y204, E209, D318, D320, D322, and E329. The Miro 2 domain occupies R420–T584. Residues G429–S436, E465–G469, and L534–D537 contribute to the GTP site. The helical; Anchor for type IV membrane protein transmembrane segment at T600–W620 threads the bilayer. The Mitochondrial intermembrane segment spans residues R621–L627.

This sequence belongs to the mitochondrial Rho GTPase family.

Its subcellular location is the mitochondrion outer membrane. Its function is as follows. Mitochondrial GTPase involved in mitochondrial trafficking. Probably involved in control of anterograde transport of mitochondria and their subcellular distribution. This Gibberella zeae (strain ATCC MYA-4620 / CBS 123657 / FGSC 9075 / NRRL 31084 / PH-1) (Wheat head blight fungus) protein is Mitochondrial Rho GTPase 1 (GEM1).